The following is an 82-amino-acid chain: MVTIRLQRGGAKKRPFYQVVVADARFARDGRFIERVGFFNPLAAGQAEKVNLDLERIQHWVGQGASLSDRVAKLVKDASKAA.

The protein belongs to the bacterial ribosomal protein bS16 family.

This is Small ribosomal subunit protein bS16 from Tolumonas auensis (strain DSM 9187 / NBRC 110442 / TA 4).